A 158-amino-acid polypeptide reads, in one-letter code: Interleukin-36 alpha (158 aa).

Positions 1–5 are excised as a propeptide; the sequence is MEKAL. At Tyr-96 the chain carries 3'-nitrotyrosine.

Belongs to the IL-1 family. As to quaternary structure, interacts with TMED10; the interaction mediates the translocation from the cytoplasm into the ERGIC (endoplasmic reticulum-Golgi intermediate compartment) and thereby secretion. In terms of processing, N-terminal truncation leads to a dramatic enhancement of its activity (&gt;1000-fold). In terms of tissue distribution, expressed in immune system and fetal brain, but not in other tissues tested or in multiple hematopoietic cell lines. Predominantly expressed in skin keratinocytes but not in fibroblasts, endothelial cells or melanocytes. Increased in lesional psoriasis skin.

It is found in the cytoplasm. It localises to the secreted. Its function is as follows. Cytokine that binds to and signals through the IL1RL2/IL-36R receptor which in turn activates NF-kappa-B and MAPK signaling pathways in target cells linked to a pro-inflammatory response. Part of the IL-36 signaling system that is thought to be present in epithelial barriers and to take part in local inflammatory response; similar to the IL-1 system with which it shares the coreceptor IL1RAP. Seems to be involved in skin inflammatory response by acting on keratinocytes, dendritic cells and indirectly on T-cells to drive tissue infiltration, cell maturation and cell proliferation. In cultured keratinocytes induces the expression of macrophage, T-cell, and neutrophil chemokines, such as CCL3, CCL4, CCL5, CCL2, CCL17, CCL22, CL20, CCL5, CCL2, CCL17, CCL22, CXCL8, CCL20 and CXCL1, and the production of pro-inflammatory cytokines such as TNF-alpha, IL-8 and IL-6. In cultured monocytes up-regulates expression of IL-1A, IL-1B and IL-6. In myeloid dendritic cells involved in cell maturation by up-regulating surface expression of CD83, CD86 and HLA-DR. In monocyte-derived dendritic cells facilitates dendritic cell maturation and drives T-cell proliferation. May play a role in pro-inflammatory effects in the lung. The polypeptide is Interleukin-36 alpha (Homo sapiens (Human)).